The sequence spans 80 residues: MMKLVLFSVIVILFSLIGSIHGADVPGNYPLRPFRYRYGCAVPGDSDYCVRVCRKHGVRYGYCWFFTCWCEYLEDKNIKI.

A signal peptide spans 1 to 22 (MMKLVLFSVIVILFSLIGSIHG). The region spanning 25–80 (VPGNYPLRPFRYRYGCAVPGDSDYCVRVCRKHGVRYGYCWFFTCWCEYLEDKNIKI) is the LCN-type CS-alpha/beta domain. 3 disulfides stabilise this stretch: Cys-40-Cys-63, Cys-49-Cys-68, and Cys-53-Cys-70.

The protein belongs to the long (3 C-C) scorpion toxin superfamily. In terms of tissue distribution, expressed by the venom gland.

Its subcellular location is the secreted. Its function is as follows. Probable ion channel inhibitor. This Androctonus australis (Sahara scorpion) protein is Toxin-like peptide AaF1CA1.